The chain runs to 111 residues: COX assembly mitochondrial protein (111 aa).

Residues 39 to 82 (YKKCANFVQAMADCAKANGMKVFPTCDKQRDEMKSCLLFYQTDE) form the CHCH domain. 2 consecutive short sequence motifs (cx9C motif) follow at residues 42–52 (CANFVQAMADC) and 64–74 (CDKQRDEMKSC). Disulfide bonds link Cys42–Cys74 and Cys52–Cys64.

It belongs to the CMC family.

The protein resides in the mitochondrion inner membrane. Its function is as follows. Required for mitochondrial cytochrome c oxidase (COX) assembly and respiration. Binds copper. May be involved in copper trafficking and distribution to mitochondrial COX and SOD1. The chain is COX assembly mitochondrial protein (CMC1) from Saccharomyces cerevisiae (strain YJM789) (Baker's yeast).